The chain runs to 358 residues: Membrane-bound lytic murein transglycosylase C (358 aa).

The N-terminal stretch at 1-16 (MKKILALLVIAPLLVS) is a signal peptide. A lipid anchor (N-palmitoyl cysteine) is attached at C17. C17 carries the S-diacylglycerol cysteine lipid modification.

Belongs to the transglycosylase Slt family.

The protein resides in the cell outer membrane. The enzyme catalyses Exolytic cleavage of the (1-&gt;4)-beta-glycosidic linkage between N-acetylmuramic acid (MurNAc) and N-acetylglucosamine (GlcNAc) residues in peptidoglycan, from either the reducing or the non-reducing ends of the peptidoglycan chains, with concomitant formation of a 1,6-anhydrobond in the MurNAc residue.. Functionally, murein-degrading enzyme. May play a role in recycling of muropeptides during cell elongation and/or cell division. The polypeptide is Membrane-bound lytic murein transglycosylase C (Yersinia enterocolitica serotype O:8 / biotype 1B (strain NCTC 13174 / 8081)).